We begin with the raw amino-acid sequence, 352 residues long: Putative hetero-Diels-Alderase (352 aa).

A signal peptide spans 1-20 (MRYHLSALVLVFTAFRETLT). Residues Asn-26, Asn-41, Asn-47, Asn-135, Asn-211, and Asn-310 are each glycosylated (N-linked (GlcNAc...) asparagine).

It belongs to the eupF Diels-Alderase family.

It functions in the pathway secondary metabolite biosynthesis; terpenoid biosynthesis. Putative hetero-Diels-Alderase; part of the gene cluster that mediates the biosynthesis of eupenifeldin, a bistropolone meroterpenoid that acts as an antitumor agent. The first step of eupenifeldin biosynthesis is the biosynthesis of 3-methylorcinaldehyde performed by the non-reducing polyketide synthase eupA. Oxidative dearomatization of 3-methylorcinaldehyde likely catalyzed by the FAD-dependent monooxygenase eupB is followed by oxidative ring expansion by the 2-oxoglutarate-dependent dioxygenase eupC to provide the first tropolone metabolite, tropolone stipitaldehyde. In parallel, generation of sesquiterpene alpha-humulene from farnesylpyrophosphate (FPP) is catalyzed by the terpene cyclase eupE. The cytochrome P450 monooxygenase eupD then hydroxylates humulene to humulenol. The putative Diels-Alderase eupF probably catalyzes the formation of the tropolone-humulene skeleton by linking humulenol and the polyketide moiety. The short-chain dehydrogenase/reductase eupG and the flavin-dependent monooxygenase eupH are also essential for eupenifeldin biosynthesis and are likely the additional decorating enzymes of the tropolone-humulene skeleton to produce final eupenifeldin or derivatives. The sequence is that of Putative hetero-Diels-Alderase from Phoma sp.